A 506-amino-acid polypeptide reads, in one-letter code: Aldehyde dehydrogenase (506 aa).

Residue 240–245 (GSTEIG) coordinates NAD(+). Active-site residues include Glu262 and Cys301.

Belongs to the aldehyde dehydrogenase family.

The enzyme catalyses an aldehyde + NAD(+) + H2O = a carboxylate + NADH + 2 H(+). It functions in the pathway alcohol metabolism; ethanol degradation; acetate from ethanol: step 2/2. May be involved in V.cholerae virulence, as its expression is under the control of ToxR, a transcriptional activator of several genes associated with virulence. In Vibrio cholerae serotype O1 (strain ATCC 39541 / Classical Ogawa 395 / O395), this protein is Aldehyde dehydrogenase (aldA).